We begin with the raw amino-acid sequence, 242 residues long: MRAKTTSRHHNVDEQEIAKFEAVASRWWDLEGEFKPLHRINPLRLNYILQRSGGIFEKKVLDVGCGGGILAESMAREGAQVTGLDMGYEPLQVARLHALETGVKLEYVQETVENHAQQHPQHYDVVTCMEMLEHVPDPASVVRACAQLVKPGGHVFFSTINRNTKSWLMAVVGAEYLLKMVPKGTHDAKKFIRPSELIGWVDQTPLLERHIIGLHYNPITDHFKLGRNVDVNYMVHTQRDSE.

Positions 44, 64, 85, and 129 each coordinate S-adenosyl-L-methionine.

It belongs to the methyltransferase superfamily. UbiG/COQ3 family.

The catalysed reaction is a 3-demethylubiquinol + S-adenosyl-L-methionine = a ubiquinol + S-adenosyl-L-homocysteine + H(+). It catalyses the reaction a 3-(all-trans-polyprenyl)benzene-1,2-diol + S-adenosyl-L-methionine = a 2-methoxy-6-(all-trans-polyprenyl)phenol + S-adenosyl-L-homocysteine + H(+). The protein operates within cofactor biosynthesis; ubiquinone biosynthesis. In terms of biological role, O-methyltransferase that catalyzes the 2 O-methylation steps in the ubiquinone biosynthetic pathway. In Yersinia pseudotuberculosis serotype O:1b (strain IP 31758), this protein is Ubiquinone biosynthesis O-methyltransferase.